The primary structure comprises 548 residues: Calcium-transporting ATPase (548 aa).

Positions 1-21 (MNFKSTVITAMCCFFSFAVLA) are cleaved as a signal peptide. Positions 37 and 78 each coordinate a divalent metal cation. Thr78 acts as the Phosphothreonine intermediate in catalysis. Substrate contacts are provided by residues Asn99 and 160 to 162 (KDR). The short motif at 179 to 187 (DGKTGDWIT) is the ATP-binding element. A divalent metal cation is bound by residues Asp305, His309, Asp352, His353, and His488.

Mg(2+) is required as a cofactor.

The protein resides in the cell inner membrane. The enzyme catalyses Ca(2+)(in) + ATP + H2O = Ca(2+)(out) + ADP + phosphate + H(+). Its activity is regulated as follows. Completely inhibited by vanadate(3-). Also inhibited by lanthanoid atom and phosphate. Not inhibited by N-ethylmaleimide, 1,3-dicyclohexylcarbodiimide, oligomycin, ouabain, valinomycin, nigericin, thapsigargin, cyclopiazonic acid or fluorescein isothiocyanate. Catalyzes the hydrolysis of ATP coupled with the transport of calcium. Has some hydrolysis activity also with dATP, GTP, UTP, ITP and 4-nitrophenyl phosphate as substrate. No activity with ADP, CTP, acetyl dihydrogen phosphate or AMP-PNP as substrate. This Myroides odoratus (Flavobacterium odoratum) protein is Calcium-transporting ATPase.